The following is a 509-amino-acid chain: Glycogen synthase 2 (509 aa).

Residue K15 participates in ADP-alpha-D-glucose binding.

The protein belongs to the glycosyltransferase 1 family. Bacterial/plant glycogen synthase subfamily.

It carries out the reaction [(1-&gt;4)-alpha-D-glucosyl](n) + ADP-alpha-D-glucose = [(1-&gt;4)-alpha-D-glucosyl](n+1) + ADP + H(+). Its pathway is glycan biosynthesis; glycogen biosynthesis. Its function is as follows. Synthesizes alpha-1,4-glucan chains using ADP-glucose. This Agrobacterium fabrum (strain C58 / ATCC 33970) (Agrobacterium tumefaciens (strain C58)) protein is Glycogen synthase 2 (glgA2).